We begin with the raw amino-acid sequence, 423 residues long: MRSLGANMAAALRAAGVLLRDPLVSSSWRVYQPWRWKSVAAAAAATTETAQHAQGAKPQVQPQKRKPKTGILMLNMGGPETLGDVHDFLLRLFLDRDLMTLPIQNKLAPFIAKRRTPKIQEQYRRIGGGSPIKIWTSKQGEGMVKLLDELSPNTAPHKYYIGFRYVHPLTEEAIEEMERDGLERAIAFTQYPQYSCSTTGSSLNAIYRYYNQVGRKPTMKWSTIDRWPTHHLLIQCFADHILKELDHFPLEKRSEVVILFSAHSLPMSVVNRGDPYPQEVSATVQKVMERLEYCNPYRLVWQSKVGPMPWLGPQTDESIKGLCERGRKNILLVPIAFTSDHIETLYELDIEYSQVLAKECGVENIRRAESLNGNPLFSKALADLVHSHIQSNELCSKQLTLSCPLCVNPVCRETKSFFTSQQL.

Residues 1-54 constitute a mitochondrion transit peptide; it reads MRSLGANMAAALRAAGVLLRDPLVSSSWRVYQPWRWKSVAAAAAATTETAQHAQ. Lys-57 bears the N6-acetyllysine mark. Residues Arg-115, Tyr-123, and Ser-130 each coordinate protoporphyrin IX. Residue Lys-138 is modified to N6-succinyllysine. Cys-196 is a [2Fe-2S] cluster binding site. Residues His-230 and Asp-383 contribute to the active site. 3 residues coordinate [2Fe-2S] cluster: Cys-403, Cys-406, and Cys-411. Lys-415 is modified (N6-acetyllysine; alternate). The residue at position 415 (Lys-415) is an N6-succinyllysine; alternate.

This sequence belongs to the ferrochelatase family. As to quaternary structure, homodimer. Homotetramer. Interaction with PGRMC1; the interaction results in decreased FECH activity. Interacts with ABCB10 and SLC25A37; this interaction forms an oligomeric complex. Forms a complex with ABCB7 and ABCB10, where a dimeric FECH bridges ABCB7 and ABCB10 homodimers; this complex may be required for cellular iron homeostasis, mitochondrial function and heme biosynthesis. Interacts with ABCB7 and ABCB10. The cofactor is [2Fe-2S] cluster.

It is found in the mitochondrion inner membrane. It catalyses the reaction heme b + 2 H(+) = protoporphyrin IX + Fe(2+). The protein operates within porphyrin-containing compound metabolism; protoheme biosynthesis; protoheme from protoporphyrin-IX: step 1/1. Functionally, catalyzes the ferrous insertion into protoporphyrin IX and participates in the terminal step in the heme biosynthetic pathway. The protein is Ferrochelatase, mitochondrial of Pan troglodytes (Chimpanzee).